Consider the following 287-residue polypeptide: Uroplakin-3a (287 aa).

The N-terminal stretch at 1 to 18 (MPPLWALLALGCLRFGSA) is a signal peptide. Over 19–207 (VNLQPQLASV…DTWPGRRSGG (189 aa)) the chain is Lumenal. N-linked (GlcNAc...) asparagine glycans are attached at residues asparagine 74, asparagine 139, and asparagine 170. Residues 208–235 (MIVITSILGSLPFFLLVGFAGAIALSLV) traverse the membrane as a helical segment. Residues 236-287 (DMGSSDGETTHDSQITQEAVPKSLGASESSYTSVNRGPPLDRAEVYSSKLQD) are Cytoplasmic-facing. Residues 242-287 (GETTHDSQITQEAVPKSLGASESSYTSVNRGPPLDRAEVYSSKLQD) form a disordered region. The segment covering 261–270 (ASESSYTSVN) has biased composition (polar residues).

Belongs to the uroplakin-3 family. As to quaternary structure, heterodimer with uroplakin-1B (UPK1B). As to expression, expressed in ureter.

Its subcellular location is the endoplasmic reticulum membrane. In terms of biological role, component of the asymmetric unit membrane (AUM); a highly specialized biomembrane elaborated by terminally differentiated urothelial cells. May play an important role in AUM-cytoskeleton interaction in terminally differentiated urothelial cells. It also contributes to the formation of urothelial glycocalyx which may play an important role in preventing bacterial adherence. This chain is Uroplakin-3a (UPK3A), found in Homo sapiens (Human).